The sequence spans 466 residues: Methylenetetrahydrofolate--tRNA-(uracil-5-)-methyltransferase TrmFO (466 aa).

Position 14–19 (14–19 (GGGLAG)) interacts with FAD.

This sequence belongs to the MnmG family. TrmFO subfamily. Requires FAD as cofactor.

It localises to the cytoplasm. It catalyses the reaction uridine(54) in tRNA + (6R)-5,10-methylene-5,6,7,8-tetrahydrofolate + NADH + H(+) = 5-methyluridine(54) in tRNA + (6S)-5,6,7,8-tetrahydrofolate + NAD(+). The catalysed reaction is uridine(54) in tRNA + (6R)-5,10-methylene-5,6,7,8-tetrahydrofolate + NADPH + H(+) = 5-methyluridine(54) in tRNA + (6S)-5,6,7,8-tetrahydrofolate + NADP(+). Functionally, catalyzes the folate-dependent formation of 5-methyl-uridine at position 54 (M-5-U54) in all tRNAs. The chain is Methylenetetrahydrofolate--tRNA-(uracil-5-)-methyltransferase TrmFO from Brucella canis (strain ATCC 23365 / NCTC 10854 / RM-666).